The chain runs to 987 residues: Ephrin type-B receptor 4a (987 aa).

An N-terminal signal peptide occupies residues 1 to 24 (MELFSRNVAAFWIILLEFLLGSVA). Topologically, residues 25 to 548 (EEEVLMNTKT…DSSSPLLVTG (524 aa)) are extracellular. Residues 26–205 (EEVLMNTKTE…FFKKCPALTR (180 aa)) enclose the Eph LBD domain. Intrachain disulfides connect C70/C187 and C104/C114. Positions 319-340 (DSADTPCTRPPSSPRSPVPQVN) are disordered. A compositionally biased stretch (pro residues) spans 326 to 335 (TRPPSSPRSP). Fibronectin type-III domains follow at residues 328–438 (PPSS…TSPN) and 442–536 (LVSG…TLPD). A helical membrane pass occupies residues 549-569 (ILIAMGMLLLIIVIGAAIYCI). The Cytoplasmic segment spans residues 570 to 987 (RKQNNYKDPE…QNKAPGNVLY (418 aa)). The Protein kinase domain occupies 621–884 (VKIEEVIGAG…NIVSALDKLI (264 aa)). ATP is bound by residues 627–635 (IGAGEFGEV) and K653. D746 acts as the Proton acceptor in catalysis. The SAM domain maps to 914-978 (SSCGTVGDWL…LSSIEALGIQ (65 aa)).

It belongs to the protein kinase superfamily. Tyr protein kinase family. Ephrin receptor subfamily.

It is found in the cell membrane. It carries out the reaction L-tyrosyl-[protein] + ATP = O-phospho-L-tyrosyl-[protein] + ADP + H(+). Functionally, receptor tyrosine kinase which binds promiscuously transmembrane ephrin-B family ligands residing on adjacent cells, leading to contact-dependent bidirectional signaling into neighboring cells. The signaling pathway downstream of the receptor is referred to as forward signaling while the signaling pathway downstream of the ephrin ligand is referred to as reverse signaling. Together with its cognate ligand/functional ligand EFNB2 is involved in the regulation of cell adhesion and cell migration, and plays a central role in heart morphogenesis, angiogenesis and blood vessel remodeling and permeability. EPHB4-mediated forward signaling controls cellular repulsion and segregation from EFNB2-expressing cells. Involved in somitogenesis. In Danio rerio (Zebrafish), this protein is Ephrin type-B receptor 4a.